A 237-amino-acid polypeptide reads, in one-letter code: Ribose-5-phosphate isomerase A (237 aa).

Residues 28 to 31, 83 to 86, and 97 to 100 contribute to the substrate site; these read SGST, DGAD, and KGRG. Residue Glu-106 is the Proton acceptor of the active site. Residue Lys-124 participates in substrate binding.

This sequence belongs to the ribose 5-phosphate isomerase family. Homodimer.

It carries out the reaction aldehydo-D-ribose 5-phosphate = D-ribulose 5-phosphate. The protein operates within carbohydrate degradation; pentose phosphate pathway; D-ribose 5-phosphate from D-ribulose 5-phosphate (non-oxidative stage): step 1/1. Functionally, catalyzes the reversible conversion of ribose-5-phosphate to ribulose 5-phosphate. The sequence is that of Ribose-5-phosphate isomerase A from Thermomicrobium roseum (strain ATCC 27502 / DSM 5159 / P-2).